The following is a 124-amino-acid chain: Large ribosomal subunit protein uL18 (124 aa).

It belongs to the universal ribosomal protein uL18 family. In terms of assembly, part of the 50S ribosomal subunit; part of the 5S rRNA/L5/L18/L25 subcomplex. Contacts the 5S and 23S rRNAs.

In terms of biological role, this is one of the proteins that bind and probably mediate the attachment of the 5S RNA into the large ribosomal subunit, where it forms part of the central protuberance. This is Large ribosomal subunit protein uL18 from Parafrankia sp. (strain EAN1pec).